The sequence spans 290 residues: Nucleotide-binding protein BAV3158 (290 aa).

9–16 (GISGSGKS) contacts ATP. Residue 58–61 (DVRS) participates in GTP binding.

The protein belongs to the RapZ-like family.

In terms of biological role, displays ATPase and GTPase activities. In Bordetella avium (strain 197N), this protein is Nucleotide-binding protein BAV3158.